Consider the following 224-residue polypeptide: Transmembrane emp24 domain-containing protein 7 (224 aa).

The first 34 residues, 1 to 34, serve as a signal peptide directing secretion; the sequence is MPRPGSAQRWAAVAGRWGCRLLALLLLVPGPGGA. Residues 35 to 187 lie on the Lumenal side of the membrane; it reads SEITFELPDN…RAEDLNTRVA (153 aa). The 83-residue stretch at 46 to 128 folds into the GOLD domain; that stretch reads KQCFYEDIAQ…HKTVYFDFQV (83 aa). Residue asparagine 103 is glycosylated (N-linked (GlcNAc...) asparagine). The chain crosses the membrane as a helical span at residues 188–208; the sequence is YWSVGEALILLVVSIGQVFLL. The Cytoplasmic segment spans residues 209–224; the sequence is KSFFSDKRTTTTRVGS. The COPII vesicle coat-binding signature appears at 211–212; sequence FF. Residues 211–224 carry the COPI vesicle coat-binding motif; sequence FFSDKRTTTTRVGS.

The protein belongs to the EMP24/GP25L family. Predominantly monomeric and to lesser extent homodimeric in endoplasmic reticulum, endoplasmic reticulum-Golgi intermediate compartment and cis-Golgi network. Oligomerizes with other members of the EMP24/GP25L family such as TMED2, TMED9 and TMED10. Interacts (via C-terminus) with COPG1; the interaction involves dimeric TMED7. In terms of processing, N-linked glycosylated in complex form containing terminal sialic acid.

The protein localises to the endoplasmic reticulum membrane. The protein resides in the golgi apparatus. It localises to the cis-Golgi network membrane. Its subcellular location is the endoplasmic reticulum-Golgi intermediate compartment membrane. It is found in the cytoplasmic vesicle. The protein localises to the COPI-coated vesicle membrane. The protein resides in the COPII-coated vesicle membrane. Functionally, potential role in vesicular protein trafficking, mainly in the early secretory pathway. Appears to play a role in the biosynthesis of secreted cargo including processing and post-translational modifications. The sequence is that of Transmembrane emp24 domain-containing protein 7 (TMED7) from Homo sapiens (Human).